A 338-amino-acid polypeptide reads, in one-letter code: Aspartate carbamoyltransferase catalytic subunit (338 aa).

Carbamoyl phosphate is bound by residues arginine 72 and threonine 73. Position 100 (lysine 100) interacts with L-aspartate. Arginine 122, histidine 152, and glutamine 155 together coordinate carbamoyl phosphate. 2 residues coordinate L-aspartate: arginine 186 and arginine 243. Carbamoyl phosphate-binding residues include glycine 284 and proline 285.

Belongs to the aspartate/ornithine carbamoyltransferase superfamily. ATCase family. As to quaternary structure, heterododecamer (2C3:3R2) of six catalytic PyrB chains organized as two trimers (C3), and six regulatory PyrI chains organized as three dimers (R2).

The catalysed reaction is carbamoyl phosphate + L-aspartate = N-carbamoyl-L-aspartate + phosphate + H(+). It functions in the pathway pyrimidine metabolism; UMP biosynthesis via de novo pathway; (S)-dihydroorotate from bicarbonate: step 2/3. Catalyzes the condensation of carbamoyl phosphate and aspartate to form carbamoyl aspartate and inorganic phosphate, the committed step in the de novo pyrimidine nucleotide biosynthesis pathway. The protein is Aspartate carbamoyltransferase catalytic subunit of Acinetobacter baumannii (strain SDF).